The sequence spans 130 residues: Early 3 receptor internalization and degradation beta protein (130 aa).

Residues Met1–Cys19 form the signal peptide. A helical transmembrane segment spans residues Ala53 to Leu77. The interval Tyr122–Leu125 is tyrosine-based sorting motif.

Belongs to the adenoviridae E3_RID-beta family. As to quaternary structure, interacts with E3 RID-alpha and E3 CR1-alpha. In terms of processing, phosphorylated on serine. Post-translationally, O-glycosylated, but not N-glycosylated.

It localises to the host membrane. Prevents infected cell apoptosis induced by the host immune system. Acts by down-regulating a number of cell surface receptors in the tumor necrosis factor (TNF) receptor superfamily, namely FAS, TNFRSF10A/TRAIL receptor 1, and TNFRSF10B/TRAIL receptor 2. Down-regulation of these death receptors protects adenovirus-infected cells from apoptosis induced by the death receptor ligands Fas ligand and TRAIL. RID complex also down-regulates certain tyrosine kinase cell surface receptors, especially the epidermal growth factor receptor (EGFR). RID-mediated Fas and EGFR down-regulation occurs via endocytosis of the receptors into endosomes followed by transport to and degradation within lysosomes. The sequence is that of Early 3 receptor internalization and degradation beta protein from Human adenovirus C serotype 2 (HAdV-2).